We begin with the raw amino-acid sequence, 965 residues long: Vacuolar membrane protease (965 aa).

Topologically, residues 1–16 (MARPSLSPSNPLGFTP) are cytoplasmic. Residues 17 to 37 (WPVTVITAVVYLALVVPLLVV) traverse the membrane as a helical segment. Over 38–387 (HHVVPSAPSS…SAFVVFELHT (350 aa)) the chain is Vacuolar. 2 N-linked (GlcNAc...) asparagine glycosylation sites follow: Asn-53 and Asn-119. Residues His-171 and Asp-183 each contribute to the Zn(2+) site. The active-site Proton acceptor is Glu-217. Positions 218, 243, and 316 each coordinate Zn(2+). A helical transmembrane segment spans residues 388-408 (LFALSVTLLVVAPLVLLVTSI). Residues 409 to 441 (ALARADKMYLFRSSASPEDSDGSEVVPLHGVRG) are Cytoplasmic-facing. A helical membrane pass occupies residues 442-462 (FFRFPFLLVIPTAVTVGLAYL). The Vacuolar portion of the chain corresponds to 463 to 472 (VTKFNPYIIH). The chain crosses the membrane as a helical span at residues 473–493 (SSEYAVWSMMISAWVFLAWFV). Topologically, residues 494–507 (SRVADFARPSAFHR) are cytoplasmic. The helical transmembrane segment at 508-528 (VYTLTWLFLVEWVFLVISTVY) threads the bilayer. Residues 529–532 (ENQY) are Vacuolar-facing. A helical transmembrane segment spans residues 533-553 (GLAGGYFVLFVFAGTFLATWI). Residues 554–661 (SYLELFALPR…WSIHLPKWVW (108 aa)) lie on the Cytoplasmic side of the membrane. The interval 577–610 (RTSSHGSRLGTASGEDVEDGEDEDDDGTTAEATE) is disordered. Acidic residues predominate over residues 591–604 (EDVEDGEDEDDDGT). The helical transmembrane segment at 662 to 682 (VLQFLLTAPLVLIFVGPLALL) threads the bilayer. Topologically, residues 683–698 (LTSALRQTGQDGSPSL) are vacuolar. Residues 699–719 (FIYIAVAALTTLLFIPLLPFI) form a helical membrane-spanning segment. At 720–725 (HRYTHH) the chain is on the cytoplasmic side. The chain crosses the membrane as a helical span at residues 726 to 746 (IPLFLLCVFAGTLIYNLVAFP). The Vacuolar segment spans residues 747 to 965 (FSPANRLKLF…LVEGSRRFEV (219 aa)). N-linked (GlcNAc...) asparagine glycans are attached at residues Asn-793 and Asn-830.

This sequence belongs to the peptidase M28 family. It depends on Zn(2+) as a cofactor.

It localises to the vacuole membrane. Functionally, may be involved in vacuolar sorting and osmoregulation. This chain is Vacuolar membrane protease, found in Aspergillus fumigatus (strain CBS 144.89 / FGSC A1163 / CEA10) (Neosartorya fumigata).